We begin with the raw amino-acid sequence, 357 residues long: Anthranilate phosphoribosyltransferase (357 aa).

5-phospho-alpha-D-ribose 1-diphosphate-binding positions include G94, 97–98 (GD), T102, 104–107 (NLST), 122–130 (KHGNRAASS), and G134. Position 94 (G94) interacts with anthranilate. S106 is a Mg(2+) binding site. N125 serves as a coordination point for anthranilate. Anthranilate is bound at residue R180. Mg(2+) is bound by residues D238 and E239.

This sequence belongs to the anthranilate phosphoribosyltransferase family. As to quaternary structure, homodimer. Requires Mg(2+) as cofactor.

The enzyme catalyses N-(5-phospho-beta-D-ribosyl)anthranilate + diphosphate = 5-phospho-alpha-D-ribose 1-diphosphate + anthranilate. It functions in the pathway amino-acid biosynthesis; L-tryptophan biosynthesis; L-tryptophan from chorismate: step 2/5. Functionally, catalyzes the transfer of the phosphoribosyl group of 5-phosphorylribose-1-pyrophosphate (PRPP) to anthranilate to yield N-(5'-phosphoribosyl)-anthranilate (PRA). This Mycobacterium sp. (strain JLS) protein is Anthranilate phosphoribosyltransferase.